The following is a 375-amino-acid chain: Anhydro-N-acetylmuramic acid kinase (375 aa).

19-26 (GTSLDGVD) lines the ATP pocket.

It belongs to the anhydro-N-acetylmuramic acid kinase family.

It carries out the reaction 1,6-anhydro-N-acetyl-beta-muramate + ATP + H2O = N-acetyl-D-muramate 6-phosphate + ADP + H(+). The protein operates within amino-sugar metabolism; 1,6-anhydro-N-acetylmuramate degradation. It functions in the pathway cell wall biogenesis; peptidoglycan recycling. Its function is as follows. Catalyzes the specific phosphorylation of 1,6-anhydro-N-acetylmuramic acid (anhMurNAc) with the simultaneous cleavage of the 1,6-anhydro ring, generating MurNAc-6-P. Is required for the utilization of anhMurNAc either imported from the medium or derived from its own cell wall murein, and thus plays a role in cell wall recycling. This chain is Anhydro-N-acetylmuramic acid kinase, found in Ruegeria sp. (strain TM1040) (Silicibacter sp.).